The chain runs to 159 residues: 3-hydroxyacyl-[acyl-carrier-protein] dehydratase FabZ (159 aa).

The active site involves H62.

Belongs to the thioester dehydratase family. FabZ subfamily.

The protein resides in the cytoplasm. It catalyses the reaction a (3R)-hydroxyacyl-[ACP] = a (2E)-enoyl-[ACP] + H2O. In terms of biological role, involved in unsaturated fatty acids biosynthesis. Catalyzes the dehydration of short chain beta-hydroxyacyl-ACPs and long chain saturated and unsaturated beta-hydroxyacyl-ACPs. The polypeptide is 3-hydroxyacyl-[acyl-carrier-protein] dehydratase FabZ (Methylobacterium nodulans (strain LMG 21967 / CNCM I-2342 / ORS 2060)).